Reading from the N-terminus, the 157-residue chain is Ribosome maturation factor RimP (157 aa).

The protein belongs to the RimP family.

Its subcellular location is the cytoplasm. Functionally, required for maturation of 30S ribosomal subunits. This chain is Ribosome maturation factor RimP, found in Geobacillus sp. (strain WCH70).